The primary structure comprises 407 residues: Imidazolonepropionase (407 aa).

Fe(3+) contacts are provided by histidine 68 and histidine 70. Residues histidine 68 and histidine 70 each coordinate Zn(2+). Arginine 77, tyrosine 140, and histidine 173 together coordinate 4-imidazolone-5-propanoate. N-formimidoyl-L-glutamate is bound at residue tyrosine 140. Histidine 238 contributes to the Fe(3+) binding site. Histidine 238 contributes to the Zn(2+) binding site. A 4-imidazolone-5-propanoate-binding site is contributed by glutamine 241. Residue aspartate 313 participates in Fe(3+) binding. Aspartate 313 contacts Zn(2+). N-formimidoyl-L-glutamate contacts are provided by asparagine 315 and glycine 317. Threonine 318 contributes to the 4-imidazolone-5-propanoate binding site.

This sequence belongs to the metallo-dependent hydrolases superfamily. HutI family. The cofactor is Zn(2+). Requires Fe(3+) as cofactor.

The protein resides in the cytoplasm. It catalyses the reaction 4-imidazolone-5-propanoate + H2O = N-formimidoyl-L-glutamate. Its pathway is amino-acid degradation; L-histidine degradation into L-glutamate; N-formimidoyl-L-glutamate from L-histidine: step 3/3. Functionally, catalyzes the hydrolytic cleavage of the carbon-nitrogen bond in imidazolone-5-propanoate to yield N-formimidoyl-L-glutamate. It is the third step in the universal histidine degradation pathway. In Burkholderia pseudomallei (strain 668), this protein is Imidazolonepropionase.